Here is an 811-residue protein sequence, read N- to C-terminus: Actin filament-associated protein 1-like 2 (811 aa).

2 disordered regions span residues 67–110 (KEAQ…PPPK) and 132–168 (EPYN…QQHQ). A PH 1 domain is found at 181-277 (DAMICAFLWR…WLKVIQDISG (97 aa)). The tract at residues 294–326 (QRQIHPKAEGTDRHSGASESGSSTDGHPETPEI) is disordered. A compositionally biased stretch (basic and acidic residues) spans 299–309 (PKAEGTDRHSG). Positions 359 to 453 (ALETSNYLNV…WLGLLLLESG (95 aa)) constitute a PH 2 domain. Disordered stretches follow at residues 500-532 (RGQR…GEAE) and 558-631 (LGSP…KERV). Composition is skewed to basic and acidic residues over residues 521–532 (DEPKSEEKGEAE), 566–577 (VSGKKDNEESER), and 622–631 (RLEKSNKERV). A coiled-coil region spans residues 642–737 (LLGKNRTEAE…KENLRKAELG (96 aa)).

In terms of assembly, interacts with src.

It is found in the cytoplasm. In terms of biological role, may play a role in a signaling cascade by enhancing the kinase activity of src. Contributes to src-regulated transcription activation. The protein is Actin filament-associated protein 1-like 2 (afap1l2) of Xenopus laevis (African clawed frog).